We begin with the raw amino-acid sequence, 83 residues long: Cytochrome b559 subunit alpha (83 aa).

The helical transmembrane segment at 21–35 (VIHSITIPSLFIAGW) threads the bilayer. His-23 is a binding site for heme.

Belongs to the PsbE/PsbF family. In terms of assembly, heterodimer of an alpha subunit and a beta subunit. PSII is composed of 1 copy each of membrane proteins PsbA, PsbB, PsbC, PsbD, PsbE, PsbF, PsbH, PsbI, PsbJ, PsbK, PsbL, PsbM, PsbT, PsbX, PsbY, PsbZ, Psb30/Ycf12, at least 3 peripheral proteins of the oxygen-evolving complex and a large number of cofactors. It forms dimeric complexes. Heme b serves as cofactor.

It is found in the plastid. Its subcellular location is the chloroplast thylakoid membrane. In terms of biological role, this b-type cytochrome is tightly associated with the reaction center of photosystem II (PSII). PSII is a light-driven water:plastoquinone oxidoreductase that uses light energy to abstract electrons from H(2)O, generating O(2) and a proton gradient subsequently used for ATP formation. It consists of a core antenna complex that captures photons, and an electron transfer chain that converts photonic excitation into a charge separation. The chain is Cytochrome b559 subunit alpha from Zygnema circumcarinatum (Green alga).